Reading from the N-terminus, the 201-residue chain is Recombination protein RecR (201 aa).

The C4-type zinc-finger motif lies at 57 to 72; that stretch reads CTHCRTFTEEESCAIC. Residues 81–176 enclose the Toprim domain; it reads GFLCVVEQPS…KVSRIAHGIP (96 aa).

The protein belongs to the RecR family.

In terms of biological role, may play a role in DNA repair. It seems to be involved in an RecBC-independent recombinational process of DNA repair. It may act with RecF and RecO. The sequence is that of Recombination protein RecR from Histophilus somni (strain 129Pt) (Haemophilus somnus).